The primary structure comprises 65 residues: Large ribosomal subunit protein bL35 (65 aa).

The protein belongs to the bacterial ribosomal protein bL35 family.

The chain is Large ribosomal subunit protein bL35 from Nostoc sp. (strain PCC 7120 / SAG 25.82 / UTEX 2576).